A 127-amino-acid chain; its full sequence is Dual endothelin-1/VEGF signal peptide receptor (127 aa).

The Extracellular portion of the chain corresponds to 1 to 65 (MNALYVTTVP…EMKSRWNWGS (65 aa)). Residues 66–84 (ITCIICFTCVGSQLSMSSS) form a helical membrane-spanning segment. At 85–127 (KASNFSGPLQLYQRGIGHITNSYKRPQAPAWPCLSSGTMGRSH) the chain is on the cytoplasmic side.

Widely expressed with higher levels in kidney and aorta.

The protein localises to the cell membrane. In terms of biological role, dual receptor for both endothelin-1 and the signal sequence of vascular endothelial growth factor A. Does not act as a receptor for angiotensin-2. Does not bind the VEGFA mature protein. May play a role in angiogenesis with a significant role in cardiovascular and neural development. The chain is Dual endothelin-1/VEGF signal peptide receptor from Mus musculus (Mouse).